The primary structure comprises 67 residues: Alpha-like toxin Lqh3 (67 aa).

In terms of domain architecture, LCN-type CS-alpha/beta spans 2–66; that stretch reads RDGYIAQPEN…GIIVEGEKCH (65 aa). Cystine bridges form between Cys-12/Cys-65, Cys-16/Cys-37, Cys-23/Cys-47, and Cys-27/Cys-49. A Serine amide modification is found at Ser-67.

It belongs to the long (4 C-C) scorpion toxin superfamily. Sodium channel inhibitor family. Alpha subfamily. Monomer. In terms of tissue distribution, expressed by the venom gland.

The protein resides in the secreted. Alpha toxins bind voltage-independently at site-3 of sodium channels (Nav) and inhibit the inactivation of the activated channels, thereby blocking neuronal transmission. The dissociation is voltage-dependent. This alpha-like toxin is highly toxic to insects and competes with LqhaIT on binding to insect sodium channels. Differs from classical anti-mammalian alpha-toxins as it inhibits sodium channel inactivation in cell bodies of hippocampus brain neurons, on which the anti-mammalian Lqh2 is inactive, and is unable to affect Nav1.2 in the rat brain, on which Lqh2 is highly active. Moreover, its pharmacological properties are unique in that its binding affinity for insect channels drops &gt;30-fold at pH 8.5 versus pH 6.5, and its rate of association with receptor site-3 on both insect and mammalian sodium channels is 4-15-fold slower compared with LqhaIT and Lqh2. In Leiurus hebraeus (Hebrew deathstalker scorpion), this protein is Alpha-like toxin Lqh3.